Reading from the N-terminus, the 75-residue chain is Small ribosomal subunit protein bS16 (75 aa).

Belongs to the bacterial ribosomal protein bS16 family.

This is Small ribosomal subunit protein bS16 from Aliarcobacter butzleri (strain RM4018) (Arcobacter butzleri).